The following is a 707-amino-acid chain: Alpha-hemolysin translocation ATP-binding protein HlyB (707 aa).

Residues 3-125 enclose the Peptidase C39 domain; the sequence is SCHKIDYGLY…ALYQGHIILI (123 aa). His-83 is a catalytic residue. In terms of domain architecture, ABC transmembrane type-1 spans 154-436; the sequence is FIETLVVSVF…LAQIWQDFQQ (283 aa). A run of 5 helical transmembrane segments spans residues 158–178, 191–211, 269–289, 295–315, and 388–408; these read LVVS…FQVV, LNVI…LSGL, ALTS…MWYY, LVIL…SPIL, and VMII…LSIG. An ABC transporter domain is found at 468-703; sequence ITFRNIRFRY…PESLYSYLYQ (236 aa). Residue 502-509 coordinates ATP; the sequence is GRSGSGKS.

It belongs to the ABC transporter superfamily. Protein-1 exporter (TC 3.A.1.109) family. In terms of assembly, homodimer.

Its subcellular location is the cell inner membrane. Functionally, part of the ABC transporter complex HlyBD involved in hemolysin export. Transmembrane domains (TMD) form a pore in the inner membrane and the ATP-binding domain (NBD) is responsible for energy generation. The polypeptide is Alpha-hemolysin translocation ATP-binding protein HlyB (hlyB) (Escherichia coli).